A 138-amino-acid chain; its full sequence is Large ribosomal subunit protein uL16 (138 aa).

Residues 1 to 16 are compositionally biased toward basic residues; sequence MLIPRRVKHRKQHHPS. The interval 1–25 is disordered; it reads MLIPRRVKHRKQHHPSRSGAAKGGT.

Belongs to the universal ribosomal protein uL16 family. As to quaternary structure, part of the 50S ribosomal subunit.

In terms of biological role, binds 23S rRNA and is also seen to make contacts with the A and possibly P site tRNAs. The polypeptide is Large ribosomal subunit protein uL16 (Rhodococcus erythropolis (strain PR4 / NBRC 100887)).